The following is a 131-amino-acid chain: NADH-quinone oxidoreductase subunit I 2 (131 aa).

4Fe-4S ferredoxin-type domains follow at residues 42–71 (LKVSHSKAKCVCCYLCPTVCPAKCITVEAG) and 81–110 (ERYEIDMLRCIFCGYCVEACPVDALKMTGE). [4Fe-4S] cluster is bound by residues C51, C54, C57, C61, C90, C93, C96, and C100.

The protein belongs to the complex I 23 kDa subunit family. NDH-1 is composed of 14 different subunits. Subunits NuoA, H, J, K, L, M, N constitute the membrane sector of the complex. [4Fe-4S] cluster serves as cofactor.

It is found in the cell inner membrane. The enzyme catalyses a quinone + NADH + 5 H(+)(in) = a quinol + NAD(+) + 4 H(+)(out). Its function is as follows. NDH-1 shuttles electrons from NADH, via FMN and iron-sulfur (Fe-S) centers, to quinones in the respiratory chain. The immediate electron acceptor for the enzyme in this species is believed to be ubiquinone. Couples the redox reaction to proton translocation (for every two electrons transferred, four hydrogen ions are translocated across the cytoplasmic membrane), and thus conserves the redox energy in a proton gradient. This chain is NADH-quinone oxidoreductase subunit I 2, found in Geobacter metallireducens (strain ATCC 53774 / DSM 7210 / GS-15).